Consider the following 1061-residue polypeptide: Ribonuclease 3 (1061 aa).

Disordered regions lie at residues 1 to 20 (MDFTEIHKRSRRKKFQQIHQ) and 149 to 244 (PLHS…SYNE). Positions 156 to 173 (KTPERKENEEDSDSEIRS) are enriched in basic and acidic residues. RNase III domains follow at residues 586 to 759 (LSVF…LDSG) and 811 to 935 (FHRL…VDKG). Mg(2+) contacts are provided by glutamate 851, aspartate 921, and glutamate 924. Residues 962–1037 (DAKSHLQQWC…AENALAALEK (76 aa)) form the DRBM domain.

The protein belongs to the ribonuclease III family. Mg(2+) is required as a cofactor. It depends on Mn(2+) as a cofactor.

It localises to the nucleus. The enzyme catalyses Endonucleolytic cleavage to 5'-phosphomonoester.. Functionally, executes the initial step of microRNA (miRNA) processing in the nucleus, that is the cleavage of pri-miRNA to release pre-miRNA. Involved in pre-rRNA processing. Cleaves double-strand RNA and does not cleave single-strand RNA. Involved in fertility. Required for the function or synthesis of the let-7 miRNA. In Caenorhabditis briggsae, this protein is Ribonuclease 3.